The following is a 683-amino-acid chain: UvrABC system protein B (683 aa).

Residues 31-414 enclose the Helicase ATP-binding domain; that stretch reads AGFEKGYKEQ…ELERTDHKVE (384 aa). 44-51 contacts ATP; the sequence is GATGTGKT. The short motif at 97–120 is the Beta-hairpin element; that stretch reads YYDYYQPEAYVPQSDTYIEKDSAI. A Helicase C-terminal domain is found at 435–601; sequence QIDDLVGEIN…TIIKPVHDVI (167 aa). The UVR domain maps to 632–667; it reads KTMIKNLQEQMKEAAKKLDFEEAANLRDAIMELQSS. Residues 662-683 are disordered; it reads MELQSSSRRPKTRKGKALNGKR. Residues 669–683 are compositionally biased toward basic residues; the sequence is RRPKTRKGKALNGKR.

Belongs to the UvrB family. As to quaternary structure, forms a heterotetramer with UvrA during the search for lesions. Interacts with UvrC in an incision complex.

The protein resides in the cytoplasm. Its function is as follows. The UvrABC repair system catalyzes the recognition and processing of DNA lesions. A damage recognition complex composed of 2 UvrA and 2 UvrB subunits scans DNA for abnormalities. Upon binding of the UvrA(2)B(2) complex to a putative damaged site, the DNA wraps around one UvrB monomer. DNA wrap is dependent on ATP binding by UvrB and probably causes local melting of the DNA helix, facilitating insertion of UvrB beta-hairpin between the DNA strands. Then UvrB probes one DNA strand for the presence of a lesion. If a lesion is found the UvrA subunits dissociate and the UvrB-DNA preincision complex is formed. This complex is subsequently bound by UvrC and the second UvrB is released. If no lesion is found, the DNA wraps around the other UvrB subunit that will check the other stand for damage. The protein is UvrABC system protein B of Lactobacillus acidophilus (strain ATCC 700396 / NCK56 / N2 / NCFM).